Here is a 125-residue protein sequence, read N- to C-terminus: Large ribosomal subunit protein bL19 (125 aa).

Belongs to the bacterial ribosomal protein bL19 family.

Functionally, this protein is located at the 30S-50S ribosomal subunit interface and may play a role in the structure and function of the aminoacyl-tRNA binding site. This chain is Large ribosomal subunit protein bL19, found in Synechococcus sp. (strain JA-2-3B'a(2-13)) (Cyanobacteria bacterium Yellowstone B-Prime).